The following is a 208-amino-acid chain: FMN-dependent NADH:quinone oxidoreductase 4 (208 aa).

The protein belongs to the azoreductase type 1 family. Homodimer. The cofactor is FMN.

It carries out the reaction 2 a quinone + NADH + H(+) = 2 a 1,4-benzosemiquinone + NAD(+). The catalysed reaction is N,N-dimethyl-1,4-phenylenediamine + anthranilate + 2 NAD(+) = 2-(4-dimethylaminophenyl)diazenylbenzoate + 2 NADH + 2 H(+). Functionally, quinone reductase that provides resistance to thiol-specific stress caused by electrophilic quinones. In terms of biological role, also exhibits azoreductase activity. Catalyzes the reductive cleavage of the azo bond in aromatic azo compounds to the corresponding amines. This Bacillus cereus (strain ZK / E33L) protein is FMN-dependent NADH:quinone oxidoreductase 4.